Reading from the N-terminus, the 158-residue chain is NAD(P)H-quinone oxidoreductase subunit J, chloroplastic (158 aa).

The protein belongs to the complex I 30 kDa subunit family. In terms of assembly, NDH is composed of at least 16 different subunits, 5 of which are encoded in the nucleus.

The protein localises to the plastid. It localises to the chloroplast thylakoid membrane. It catalyses the reaction a plastoquinone + NADH + (n+1) H(+)(in) = a plastoquinol + NAD(+) + n H(+)(out). It carries out the reaction a plastoquinone + NADPH + (n+1) H(+)(in) = a plastoquinol + NADP(+) + n H(+)(out). Functionally, NDH shuttles electrons from NAD(P)H:plastoquinone, via FMN and iron-sulfur (Fe-S) centers, to quinones in the photosynthetic chain and possibly in a chloroplast respiratory chain. The immediate electron acceptor for the enzyme in this species is believed to be plastoquinone. Couples the redox reaction to proton translocation, and thus conserves the redox energy in a proton gradient. In Drimys granadensis, this protein is NAD(P)H-quinone oxidoreductase subunit J, chloroplastic.